A 276-amino-acid polypeptide reads, in one-letter code: Large ribosomal subunit protein uL2 (276 aa).

Residues 225-276 (MNPNDHPHGGGEGRNPIGRNPVTPWGKPALGAKTRKKKHPSNRFIVKRRGKK) are disordered. Positions 257-276 (KTRKKKHPSNRFIVKRRGKK) are enriched in basic residues.

The protein belongs to the universal ribosomal protein uL2 family. In terms of assembly, part of the 50S ribosomal subunit. Forms a bridge to the 30S subunit in the 70S ribosome.

Functionally, one of the primary rRNA binding proteins. Required for association of the 30S and 50S subunits to form the 70S ribosome, for tRNA binding and peptide bond formation. It has been suggested to have peptidyltransferase activity; this is somewhat controversial. Makes several contacts with the 16S rRNA in the 70S ribosome. The sequence is that of Large ribosomal subunit protein uL2 from Desulfitobacterium hafniense (strain Y51).